A 101-amino-acid chain; its full sequence is Small ribosomal subunit protein uS14 (101 aa).

It belongs to the universal ribosomal protein uS14 family. As to quaternary structure, part of the 30S ribosomal subunit. Contacts proteins S3 and S10.

Functionally, binds 16S rRNA, required for the assembly of 30S particles and may also be responsible for determining the conformation of the 16S rRNA at the A site. The protein is Small ribosomal subunit protein uS14 of Francisella tularensis subsp. holarctica (strain FTNF002-00 / FTA).